The chain runs to 279 residues: Lacto-N-neotetraose biosynthesis glycosyltransferase LgtB (279 aa).

It belongs to the glycosyltransferase 25 family.

Its pathway is glycan metabolism; lacto-N-neotetraose biosynthesis. It participates in bacterial outer membrane biogenesis; lipooligosaccharide biosynthesis. Adds the second galactose to the lacto-N-tetraose chain in lipooligosaccharide (LOS). The sequence is that of Lacto-N-neotetraose biosynthesis glycosyltransferase LgtB (lgtB) from Neisseria gonorrhoeae.